A 434-amino-acid polypeptide reads, in one-letter code: Serine hydroxymethyltransferase (434 aa).

(6S)-5,6,7,8-tetrahydrofolate contacts are provided by residues Leu128 and 132 to 134; that span reads GHL. Lys237 carries the N6-(pyridoxal phosphate)lysine modification.

It belongs to the SHMT family. Homodimer. The cofactor is pyridoxal 5'-phosphate.

The protein localises to the cytoplasm. It catalyses the reaction (6R)-5,10-methylene-5,6,7,8-tetrahydrofolate + glycine + H2O = (6S)-5,6,7,8-tetrahydrofolate + L-serine. Its pathway is one-carbon metabolism; tetrahydrofolate interconversion. The protein operates within amino-acid biosynthesis; glycine biosynthesis; glycine from L-serine: step 1/1. Its function is as follows. Catalyzes the reversible interconversion of serine and glycine with tetrahydrofolate (THF) serving as the one-carbon carrier. This reaction serves as the major source of one-carbon groups required for the biosynthesis of purines, thymidylate, methionine, and other important biomolecules. Also exhibits THF-independent aldolase activity toward beta-hydroxyamino acids, producing glycine and aldehydes, via a retro-aldol mechanism. This is Serine hydroxymethyltransferase from Corynebacterium efficiens (strain DSM 44549 / YS-314 / AJ 12310 / JCM 11189 / NBRC 100395).